Here is a 111-residue protein sequence, read N- to C-terminus: MSTAELACSYAALILADDGVEITADKIQTLLGAAKVADVEPIWTSLFAKALEGKDIKDLLTNVGSGGAAAPAAVGGAAAGAAAPAEAAAAEEKKEEEKEESDEDMGFGLFD.

The interval 84–111 is disordered; the sequence is PAEAAAAEEKKEEEKEESDEDMGFGLFD.

The protein belongs to the eukaryotic ribosomal protein P1/P2 family. As to quaternary structure, P1 and P2 exist as dimers at the large ribosomal subunit. In terms of processing, phosphorylated.

In terms of biological role, plays an important role in the elongation step of protein synthesis. The polypeptide is Large ribosomal subunit protein P1 (Aspergillus fumigatus (strain ATCC MYA-4609 / CBS 101355 / FGSC A1100 / Af293) (Neosartorya fumigata)).